The chain runs to 341 residues: Cell division protein FtsQ (341 aa).

The Cytoplasmic segment spans residues M1 to K126. A helical membrane pass occupies residues T127–V147. The Extracellular segment spans residues T148–K341. The region spanning M151–R219 is the POTRA domain.

It belongs to the FtsQ/DivIB family. FtsQ subfamily.

It is found in the cell membrane. In terms of biological role, essential cell division protein. The sequence is that of Cell division protein FtsQ from Mycobacterium leprae (strain Br4923).